The following is a 401-amino-acid chain: tRNA N6-adenosine threonylcarbamoyltransferase (401 aa).

Fe cation contacts are provided by His-111 and His-115. Residues 191–195 (LASGG), Asp-223, Gly-236, and Asn-336 contribute to the substrate site. Residue Asp-364 participates in Fe cation binding.

Belongs to the KAE1 / TsaD family. It depends on Fe(2+) as a cofactor.

The protein resides in the cytoplasm. It catalyses the reaction L-threonylcarbamoyladenylate + adenosine(37) in tRNA = N(6)-L-threonylcarbamoyladenosine(37) in tRNA + AMP + H(+). Required for the formation of a threonylcarbamoyl group on adenosine at position 37 (t(6)A37) in tRNAs that read codons beginning with adenine. Is involved in the transfer of the threonylcarbamoyl moiety of threonylcarbamoyl-AMP (TC-AMP) to the N6 group of A37, together with TsaE and TsaB. TsaD likely plays a direct catalytic role in this reaction. In Tropheryma whipplei (strain TW08/27) (Whipple's bacillus), this protein is tRNA N6-adenosine threonylcarbamoyltransferase.